A 357-amino-acid chain; its full sequence is Nicotinate-nucleotide--dimethylbenzimidazole phosphoribosyltransferase (357 aa).

The active-site Proton acceptor is the E317.

It belongs to the CobT family.

The catalysed reaction is 5,6-dimethylbenzimidazole + nicotinate beta-D-ribonucleotide = alpha-ribazole 5'-phosphate + nicotinate + H(+). The protein operates within nucleoside biosynthesis; alpha-ribazole biosynthesis; alpha-ribazole from 5,6-dimethylbenzimidazole: step 1/2. Its function is as follows. Catalyzes the synthesis of alpha-ribazole-5'-phosphate from nicotinate mononucleotide (NAMN) and 5,6-dimethylbenzimidazole (DMB). The sequence is that of Nicotinate-nucleotide--dimethylbenzimidazole phosphoribosyltransferase from Halalkalibacterium halodurans (strain ATCC BAA-125 / DSM 18197 / FERM 7344 / JCM 9153 / C-125) (Bacillus halodurans).